Consider the following 367-residue polypeptide: CCN family member 4 (367 aa).

The N-terminal stretch at 1 to 22 (MRWFLPWTLAAVTAAAASTVLA) is a signal peptide. The region spanning 45–118 (RPQFCKWPCE…RYAIGVCAQV (74 aa)) is the IGFBP N-terminal domain. Intrachain disulfides connect cysteine 49-cysteine 73, cysteine 53-cysteine 75, cysteine 55-cysteine 76, and cysteine 62-cysteine 79. Asparagine 86 carries an N-linked (GlcNAc...) asparagine glycan. 2 disulfide bridges follow: cysteine 87–cysteine 101 and cysteine 93–cysteine 115. Positions 121-186 (VGCVLDGVRY…GHCCEQWVCE (66 aa)) constitute a VWFC domain. Asparagine 143 is a glycosylation site (N-linked (GlcNAc...) asparagine). A TSP type-1 domain is found at 215-260 (NCIAYTSPWSPCSTSCGLGVSTRISNVNAQCWPEQESRLCNLRPCD). 5 disulfides stabilise this stretch: cysteine 273/cysteine 310, cysteine 290/cysteine 324, cysteine 301/cysteine 340, cysteine 304/cysteine 342, and cysteine 309/cysteine 346. The region spanning 273–347 (CLAVYQPEAS…NACFCNLSCR (75 aa)) is the CTCK domain. Asparagine 284 is a glycosylation site (N-linked (GlcNAc...) asparagine). Residue asparagine 343 is glycosylated (N-linked (GlcNAc...) asparagine).

It belongs to the CCN family. In terms of tissue distribution, expressed in heart, kidney, lung, pancreas, placenta, ovary, small intestine and spleen. Isoform 2 is expressed predominantly in scirrhous gastric carcinoma and, weakly in placenta. Overexpression is associated with several cancers including breast cancer and colon tumors. Isoform 2 is overexpressed in scirrhous gastric carcinoma.

It is found in the secreted. In terms of biological role, downstream regulator in the Wnt/Frizzled-signaling pathway. Associated with cell survival. Attenuates p53-mediated apoptosis in response to DNA damage through activation of AKT kinase. Up-regulates the anti-apoptotic Bcl-X(L) protein. Adheres to skin and melanoma fibroblasts. In vitro binding to skin fibroblasts occurs through the proteoglycans, decorin and biglycan. The chain is CCN family member 4 from Homo sapiens (Human).